The chain runs to 465 residues: Poly(A) polymerase I (465 aa).

Residues aspartate 80, aspartate 82, and aspartate 162 contribute to the active site. The disordered stretch occupies residues 430 to 465 (APPEQKGMLNELDDDPAPRRRRSRPRKRAPRREGTV). Positions 448–459 (RRRRSRPRKRAP) are enriched in basic residues.

The protein belongs to the tRNA nucleotidyltransferase/poly(A) polymerase family.

The enzyme catalyses RNA(n) + ATP = RNA(n)-3'-adenine ribonucleotide + diphosphate. Functionally, adds poly(A) tail to the 3' end of many RNAs, which usually targets these RNAs for decay. Plays a significant role in the global control of gene expression, through influencing the rate of transcript degradation, and in the general RNA quality control. This is Poly(A) polymerase I from Salmonella typhimurium (strain LT2 / SGSC1412 / ATCC 700720).